The following is a 335-amino-acid chain: NmrA-like family domain-containing oxidoreductase ptmS (335 aa).

NADP(+)-binding positions include 12–17, 39–43, 60–61, 81–88, lysine 139, and 163–166; these read GATGNQ, RDPNS, DG, INSDDPVF, and FLEN. The segment at 161 to 206 is interaction with ASS1; the sequence is GYFLENFLFKQGAFIMGGFPWETDAEGYLTWKVPYWGGEEQIPFLS.

It belongs to the NmrA-type oxidoreductase family.

It participates in secondary metabolite biosynthesis. Its function is as follows. NmrA-like family domain-containing oxidoreductase; part of the gene cluster that mediates the biosynthesis of the indole diterpenes penitrems. The geranylgeranyl diphosphate (GGPP) synthase ptmG catalyzes the first step in penitrem biosynthesis via conversion of farnesyl pyrophosphate and isopentyl pyrophosphate into geranylgeranyl pyrophosphate (GGPP). Condensation of indole-3-glycerol phosphate with GGPP by the prenyl transferase ptmC then forms 3-geranylgeranylindole (3-GGI). Epoxidation by the FAD-dependent monooxygenase ptmM leads to a epoxidized-GGI that is substrate of the terpene cyclase ptmB for cyclization to yield paspaline. Paspaline is subsequently converted to 13-desoxypaxilline by the cytochrome P450 monooxygenase ptmP, the latter being then converted to paxilline by the cytochrome P450 monooxygenase ptmQ. Paxilline is converted to beta-paxitriol via C-10 ketoreduction by the short-chain dehydrogenase ptmH which can be monoprenylated at the C-20 by the indole diterpene prenyltransferase ptmD. A two-step elimination (acetylation and elimination) process performed by the O-acetyltransferase ptmV and ptmI leads to the production of the prenylated form of penijanthine. The FAD-linked oxidoreductase ptmO then converts the prenylated form of penijanthine into PC-M5 which is in turn transformed into PC-M4 by the aromatic dimethylallyltransferase ptmE. Five sequential oxidative transformations performed by the cytochrome P450 monooxygenases ptmK, ptmU, ptmL, ptmN and ptmJ yield the various penitrem compounds. PtmK, ptmU and ptmM are involved in the formation of the key bicyclic ring of penitrem C via the formation of the intermediates secopenitrem D and penitrem D. PtmL catalyzes the epoxidation of penitrem D and C to yield penitrem B and F, respectively. PtmJ catalyzes the last benzylic hydroxylation to convert penitrem B to prenitrem E and penitrem F to penitrem A. In Penicillium ochrochloron, this protein is NmrA-like family domain-containing oxidoreductase ptmS.